Here is a 233-residue protein sequence, read N- to C-terminus: Biosynthetic peptidoglycan transglycosylase (233 aa).

A helical membrane pass occupies residues 8–28 (LIALPVGIFIFFNAYVYGNII).

Belongs to the glycosyltransferase 51 family.

The protein resides in the cell inner membrane. It catalyses the reaction [GlcNAc-(1-&gt;4)-Mur2Ac(oyl-L-Ala-gamma-D-Glu-L-Lys-D-Ala-D-Ala)](n)-di-trans,octa-cis-undecaprenyl diphosphate + beta-D-GlcNAc-(1-&gt;4)-Mur2Ac(oyl-L-Ala-gamma-D-Glu-L-Lys-D-Ala-D-Ala)-di-trans,octa-cis-undecaprenyl diphosphate = [GlcNAc-(1-&gt;4)-Mur2Ac(oyl-L-Ala-gamma-D-Glu-L-Lys-D-Ala-D-Ala)](n+1)-di-trans,octa-cis-undecaprenyl diphosphate + di-trans,octa-cis-undecaprenyl diphosphate + H(+). It participates in cell wall biogenesis; peptidoglycan biosynthesis. In terms of biological role, peptidoglycan polymerase that catalyzes glycan chain elongation from lipid-linked precursors. In Neisseria meningitidis serogroup C / serotype 2a (strain ATCC 700532 / DSM 15464 / FAM18), this protein is Biosynthetic peptidoglycan transglycosylase.